A 525-amino-acid polypeptide reads, in one-letter code: ATP synthase subunit alpha (525 aa).

169–176 (GDRQTGKT) contacts ATP.

This sequence belongs to the ATPase alpha/beta chains family. In terms of assembly, F-type ATPases have 2 components, CF(1) - the catalytic core - and CF(0) - the membrane proton channel. CF(1) has five subunits: alpha(3), beta(3), gamma(1), delta(1), epsilon(1). CF(0) has three main subunits: a(1), b(2) and c(9-12). The alpha and beta chains form an alternating ring which encloses part of the gamma chain. CF(1) is attached to CF(0) by a central stalk formed by the gamma and epsilon chains, while a peripheral stalk is formed by the delta and b chains.

It localises to the cell membrane. The catalysed reaction is ATP + H2O + 4 H(+)(in) = ADP + phosphate + 5 H(+)(out). Functionally, produces ATP from ADP in the presence of a proton gradient across the membrane. The alpha chain is a regulatory subunit. The protein is ATP synthase subunit alpha of Mycoplasma capricolum subsp. capricolum (strain California kid / ATCC 27343 / NCTC 10154).